A 154-amino-acid chain; its full sequence is MVERELKVRPIRSGTVIDHIQAGQALNVLKILGISGTTGATVSVLMNVSSRKLGKKDIVKVEDRELREDEVNKIALIAPGATINIVRDYAVVEKYAVDLPDVIVGVVRCQNPSCISNTNEPIKPKMLVKGKNPVVLRCFYCDQPLTERIAEYLL.

4 residues coordinate Zn(2+): Cys-109, Cys-114, Cys-138, and Cys-141.

It belongs to the PyrI family. In terms of assembly, contains catalytic and regulatory chains. It depends on Zn(2+) as a cofactor.

Functionally, involved in allosteric regulation of aspartate carbamoyltransferase. The sequence is that of Aspartate carbamoyltransferase regulatory chain from Methanothrix thermoacetophila (strain DSM 6194 / JCM 14653 / NBRC 101360 / PT) (Methanosaeta thermophila).